A 219-amino-acid polypeptide reads, in one-letter code: Vacuolar iron transporter homolog 2.1 (219 aa).

Positions 1–15 (MTSNVQLSETNSPRN) are enriched in polar residues. Positions 1–26 (MTSNVQLSETNSPRNQKTRPRAEKEE) are disordered. An N-acetylthreonine modification is found at threonine 2. At 2–37 (TSNVQLSETNSPRNQKTRPRAEKEEVDYMQRAQWLR) the chain is on the cytoplasmic side. Residues 38–58 (AALLGANDGLVTVASLMMGVG) form a helical membrane-spanning segment. Residues 59 to 67 (SIKEDVKAM) are Vacuolar-facing. Residues 68 to 88 (LLVGFAGLVAGACSMAIGEFV) form a helical membrane-spanning segment. The Cytoplasmic portion of the chain corresponds to 89–133 (SVCTQRDIETAQMKRAIEHKTSLSAIDEQEEEEKKERLPNPGQAA). The chain crosses the membrane as a helical span at residues 134-154 (IASALAFSVGAAMPLLGAVFI). Residues 155–161 (ENHKVRM) are Vacuolar-facing. A helical transmembrane segment spans residues 162 to 182 (VVVAVVATIALVVFGVTGAVL). Over 183–193 (GKTSVVKSSVR) the chain is Cytoplasmic. Residues 194 to 214 (VVIGGWMAMALTFGLTKFIGS) form a helical membrane-spanning segment. At 215-219 (AAMQI) the chain is on the vacuolar side.

The protein belongs to the CCC1 family. Highly expressed in roots. inflorescences and at lower levels in leaves.

It localises to the vacuole membrane. The catalysed reaction is Fe(2+)(in) = Fe(2+)(out). Its function is as follows. Vacuolar iron transporter involved in the transfer of iron ions from the cytosol to the vacuole for intracellular iron storage. Involved in regulation of cellular iron homeostasis. Vacuolar iron storage is required for seed embryo and seedling development. The sequence is that of Vacuolar iron transporter homolog 2.1 from Arabidopsis thaliana (Mouse-ear cress).